The primary structure comprises 413 residues: Acyltransferase mokF (413 aa).

Arginine 93 serves as a coordination point for monacolin J. Serine 96 (acyl-ester intermediate) is an active-site residue. 3 residues coordinate monacolin J: arginine 193, tyrosine 208, and tyrosine 278. Residue glycine 386 coordinates 2-methylbutanoate.

It belongs to the class-A beta-lactamase family.

The catalysed reaction is monacolin J carboxylate + (S)-2-methylbutanoyl-[2-methylbutanoate polyketide synthase] = lovastatin carboxylate + holo-[2-methylbutanoate polyketide synthase]. Its pathway is polyketide biosynthesis; lovastatin biosynthesis. Its function is as follows. Acyltransferase; part of the gene cluster that mediates the biosynthesis of monakolin K, also known as lovastatin, and which acts as a potent competitive inhibitor of HMG-CoA reductase. Monakolin K biosynthesis is performed in two stages. The first stage is catalyzed by the nonaketide synthase mokA, which belongs to type I polyketide synthases and catalyzes the iterative nine-step formation of the polyketide. This PKS stage is completed by the action of dehydrogenase mokE, which catalyzes the NADPH-dependent reduction of the unsaturated tetra-, penta- and heptaketide intermediates that arise during the mokA-mediated biosynthesis of the nonaketide chain and leads to dihydromonacolin L. Covalently bound dihydromonacolin L is released from mokA by the mokD esterase. Conversion of dihydromonacolin L into monacolin L and then monacolin J is subsequently performed with the participation of molecular oxygen and P450 monoogygenase mokC. Finally, mokF performs the conversion of monacoline J to monacoline K through the addition of the side-chain diketide moiety (2R)-2-methylbutanoate produced by the diketide synthase mokB. The polypeptide is Acyltransferase mokF (Monascus pilosus (Red mold)).